We begin with the raw amino-acid sequence, 268 residues long: Tryptophan synthase alpha chain (268 aa).

Residues Glu-49 and Asp-60 each act as proton acceptor in the active site.

The protein belongs to the TrpA family. Tetramer of two alpha and two beta chains.

It carries out the reaction (1S,2R)-1-C-(indol-3-yl)glycerol 3-phosphate + L-serine = D-glyceraldehyde 3-phosphate + L-tryptophan + H2O. It functions in the pathway amino-acid biosynthesis; L-tryptophan biosynthesis; L-tryptophan from chorismate: step 5/5. The alpha subunit is responsible for the aldol cleavage of indoleglycerol phosphate to indole and glyceraldehyde 3-phosphate. The chain is Tryptophan synthase alpha chain from Aeromonas salmonicida (strain A449).